The following is a 331-amino-acid chain: Tetraacyldisaccharide 4'-kinase (331 aa).

51 to 58 (TAGGAGKT) provides a ligand contact to ATP.

This sequence belongs to the LpxK family.

The enzyme catalyses a lipid A disaccharide + ATP = a lipid IVA + ADP + H(+). It functions in the pathway glycolipid biosynthesis; lipid IV(A) biosynthesis; lipid IV(A) from (3R)-3-hydroxytetradecanoyl-[acyl-carrier-protein] and UDP-N-acetyl-alpha-D-glucosamine: step 6/6. Its function is as follows. Transfers the gamma-phosphate of ATP to the 4'-position of a tetraacyldisaccharide 1-phosphate intermediate (termed DS-1-P) to form tetraacyldisaccharide 1,4'-bis-phosphate (lipid IVA). The chain is Tetraacyldisaccharide 4'-kinase from Rhodospirillum rubrum (strain ATCC 11170 / ATH 1.1.1 / DSM 467 / LMG 4362 / NCIMB 8255 / S1).